A 200-amino-acid chain; its full sequence is Glycerol-3-phosphate acyltransferase (200 aa).

5 helical membrane passes run 2-22 (IHLL…AVIV), 51-71 (TAAI…VVAA), 84-104 (IVLL…FFGF), 113-133 (ALGI…ATWV), and 143-163 (SLSA…LLGW).

Belongs to the PlsY family. As to quaternary structure, probably interacts with PlsX.

The protein localises to the cell inner membrane. The catalysed reaction is an acyl phosphate + sn-glycerol 3-phosphate = a 1-acyl-sn-glycero-3-phosphate + phosphate. It participates in lipid metabolism; phospholipid metabolism. Catalyzes the transfer of an acyl group from acyl-phosphate (acyl-PO(4)) to glycerol-3-phosphate (G3P) to form lysophosphatidic acid (LPA). This enzyme utilizes acyl-phosphate as fatty acyl donor, but not acyl-CoA or acyl-ACP. This is Glycerol-3-phosphate acyltransferase from Thiobacillus denitrificans (strain ATCC 25259 / T1).